Consider the following 177-residue polypeptide: GTP-dependent dephospho-CoA kinase (177 aa).

Residues Asp-48, Val-49, Val-50, Asp-67, Lys-69, Glu-124, and Asp-147 each coordinate GTP.

The protein belongs to the GTP-dependent DPCK family.

It carries out the reaction 3'-dephospho-CoA + GTP = GDP + CoA + H(+). Its pathway is cofactor biosynthesis; coenzyme A biosynthesis. Its function is as follows. Catalyzes the GTP-dependent phosphorylation of the 3'-hydroxyl group of dephosphocoenzyme A to form coenzyme A (CoA). The polypeptide is GTP-dependent dephospho-CoA kinase (Thermococcus onnurineus (strain NA1)).